Reading from the N-terminus, the 251-residue chain is L-ascorbate peroxidase 2, cytosolic (251 aa).

Catalysis depends on His-43, which acts as the Proton acceptor. Positions 113–137 (EVPFHPGRQDKPEPPPEGRLPDATQ) are disordered. The span at 119-132 (GRQDKPEPPPEGRL) shows a compositional bias: basic and acidic residues. His-164 provides a ligand contact to heme b. K(+)-binding residues include Thr-165, Thr-181, Asn-183, Ile-186, and Asp-188.

It belongs to the peroxidase family. Ascorbate peroxidase subfamily. Heme b serves as cofactor. Expressed in aerial vegetative parts and reproductive organs. Expressed in roots, leaves, stems and flowers. Expressed in young leaves, internodes, blade ears, stems and anthers.

It is found in the cytoplasm. It carries out the reaction L-ascorbate + H2O2 = L-dehydroascorbate + 2 H2O. With respect to regulation, inhibited by p-chloromercuriphenylsulfonic acid (CMPSA). In terms of biological role, plays a key role in hydrogen peroxide removal. Plays an important role in plant growth and development by protecting the seedlings from abiotic stresses through scavenging reactive oxygen species. Required for pollen viability. The chain is L-ascorbate peroxidase 2, cytosolic from Oryza sativa subsp. japonica (Rice).